The following is a 201-amino-acid chain: dTTP/UTP pyrophosphatase (201 aa).

The Proton acceptor role is filled by Asp-79.

This sequence belongs to the Maf family. YhdE subfamily. It depends on a divalent metal cation as a cofactor.

It is found in the cytoplasm. The enzyme catalyses dTTP + H2O = dTMP + diphosphate + H(+). It carries out the reaction UTP + H2O = UMP + diphosphate + H(+). Nucleoside triphosphate pyrophosphatase that hydrolyzes dTTP and UTP. May have a dual role in cell division arrest and in preventing the incorporation of modified nucleotides into cellular nucleic acids. The protein is dTTP/UTP pyrophosphatase of Hahella chejuensis (strain KCTC 2396).